We begin with the raw amino-acid sequence, 350 residues long: Galactokinase (350 aa).

Substrate is bound at residue 14-17 (EHTD). ATP contacts are provided by residues S46 and 96 to 102 (GAGLSSS). Positions 102 and 134 each coordinate Mg(2+). The active-site Proton acceptor is D146. Y196 is a substrate binding site.

It belongs to the GHMP kinase family. GalK subfamily.

The protein resides in the cytoplasm. It catalyses the reaction alpha-D-galactose + ATP = alpha-D-galactose 1-phosphate + ADP + H(+). It participates in carbohydrate metabolism; galactose metabolism. Catalyzes the transfer of the gamma-phosphate of ATP to D-galactose to form alpha-D-galactose-1-phosphate (Gal-1-P). The sequence is that of Galactokinase from Thermotoga neapolitana.